Consider the following 603-residue polypeptide: DNA ligase (603 aa).

E262 is an ATP binding site. K264 (N6-AMP-lysine intermediate) is an active-site residue. Positions 269, 285, 315, 355, 432, and 438 each coordinate ATP.

It belongs to the ATP-dependent DNA ligase family. Mg(2+) is required as a cofactor.

The catalysed reaction is ATP + (deoxyribonucleotide)n-3'-hydroxyl + 5'-phospho-(deoxyribonucleotide)m = (deoxyribonucleotide)n+m + AMP + diphosphate.. In terms of biological role, DNA ligase that seals nicks in double-stranded DNA during DNA replication, DNA recombination and DNA repair. The polypeptide is DNA ligase (Caldivirga maquilingensis (strain ATCC 700844 / DSM 13496 / JCM 10307 / IC-167)).